The chain runs to 410 residues: Subtilisin-like protease CPC735_003880 (410 aa).

Positions 1–17 (MKLLKSSLLLLLPFVTA) are cleaved as a signal peptide. The propeptide occupies 18 to 118 (NPIPSEDKDI…VTPDRKVYLA (101 aa)). Residues 31-118 (RYIVTLKDGI…VTPDRKVYLA (88 aa)) enclose the Inhibitor I9 domain. The Peptidase S8 domain occupies 127-410 (GYNLGHMSSK…IQEMNETVIA (284 aa)). The Charge relay system role is filled by Asp-159. Asn-182 carries N-linked (GlcNAc...) asparagine glycosylation. His-191 acts as the Charge relay system in catalysis. 3 N-linked (GlcNAc...) asparagine glycosylation sites follow: Asn-238, Asn-251, and Asn-338. Ser-347 serves as the catalytic Charge relay system. N-linked (GlcNAc...) asparagine glycosylation is present at Asn-405.

It belongs to the peptidase S8 family.

The protein resides in the secreted. Secreted subtilisin-like serine protease with keratinolytic activity that contributes to pathogenicity. This is Subtilisin-like protease CPC735_003880 from Coccidioides posadasii (strain C735) (Valley fever fungus).